The primary structure comprises 360 residues: MLVWFAEYLLKYNTAFNVVSYISFRSIMALLTAMAIGLWIGPKVINRLQILKFGQEVRNDGPESHFKKRGTPTMGGIMILVSIGVSSLLWADLRNPYVWFTLFVLFGYGIVGFVDDYWKIARKNTDGLVARWKYFWLSFIAFIAAFSMYAMGKDTAATQLVVPFFKEVMPQLGLFYIILAYFVIVGTSNAVNLTDGLDGLAIVPTIMVTAAFALIAWATGNIHAAEYLYIPYIRHSGELAIMCTAIVGAGLGFLWYNTYPAQVFMGDVGSLSLGGALGVIAVLVRQELLLLVMGGVFVVEALSVILQVGSYKLRQKRIFRMAPIHHHFELKGWPEPRVIVRFWIITLVLVLVGLVTLKLR.

10 helical membrane-spanning segments follow: residues 26–46, 73–93, 98–118, 132–152, 168–188, 199–219, 236–256, 263–283, 288–308, and 338–358; these read SIMA…KVIN, TMGG…WADL, VWFT…DDYW, WKYF…YAMG, VMPQ…VGTS, GLAI…AWAT, SGEL…FLWY, VFMG…IAVL, LLLL…ILQV, and VIVR…VTLK.

Belongs to the glycosyltransferase 4 family. MraY subfamily. Mg(2+) serves as cofactor.

Its subcellular location is the cell inner membrane. It catalyses the reaction UDP-N-acetyl-alpha-D-muramoyl-L-alanyl-gamma-D-glutamyl-meso-2,6-diaminopimeloyl-D-alanyl-D-alanine + di-trans,octa-cis-undecaprenyl phosphate = di-trans,octa-cis-undecaprenyl diphospho-N-acetyl-alpha-D-muramoyl-L-alanyl-D-glutamyl-meso-2,6-diaminopimeloyl-D-alanyl-D-alanine + UMP. It functions in the pathway cell wall biogenesis; peptidoglycan biosynthesis. In terms of biological role, catalyzes the initial step of the lipid cycle reactions in the biosynthesis of the cell wall peptidoglycan: transfers peptidoglycan precursor phospho-MurNAc-pentapeptide from UDP-MurNAc-pentapeptide onto the lipid carrier undecaprenyl phosphate, yielding undecaprenyl-pyrophosphoryl-MurNAc-pentapeptide, known as lipid I. The polypeptide is Phospho-N-acetylmuramoyl-pentapeptide-transferase (Haemophilus ducreyi (strain 35000HP / ATCC 700724)).